Consider the following 32-residue polypeptide: Photosystem II reaction center protein T (32 aa).

M1 is subject to N-formylmethionine. Residues 1–2 lie on the Lumenal side of the membrane; sequence ME. The chain crosses the membrane as a helical span at residues 3–23; it reads TITYVFIFACIIALFFFAIFF. The Cytoplasmic portion of the chain corresponds to 24 to 32; it reads REPPRITKK.

It belongs to the PsbT family. In terms of assembly, PSII is composed of 1 copy each of membrane proteins PsbA, PsbB, PsbC, PsbD, PsbE, PsbF, PsbH, PsbI, PsbJ, PsbK, PsbL, PsbM, PsbT, PsbX, PsbY, PsbZ, Psb30/Ycf12, PsbO, CyanoQ (PsbQ), PsbU, PsbV and a large number of cofactors. It forms dimeric complexes. Part of a photosystem II (PSII) assembly intermediate complex PSII-I; crystallized from a strain deleted of psbJ, it forms monomeric PSII before addition of the oxygen evolving complex. PSII-I includes 3 assembly factors not found in mature PSII (Psb27, Psb28 and Psb34). Requires PSII binds multiple chlorophylls, carotenoids and specific lipids. as cofactor.

The protein resides in the cellular thylakoid membrane. Its function is as follows. Found at the monomer-monomer interface of the photosystem II (PS II) dimer, plays a role in assembly and dimerization of PSII. PSII is a light-driven water plastoquinone oxidoreductase, using light energy to abstract electrons from H(2)O, generating a proton gradient subsequently used for ATP formation. The chain is Photosystem II reaction center protein T from Thermosynechococcus vestitus (strain NIES-2133 / IAM M-273 / BP-1).